A 557-amino-acid chain; its full sequence is MPSDIEIARAATLKPIAQVAERIGIPDEALHNYGKHIAKIDHGFIKSLEGKPEGKLVLVTAISPTPAGEGKTTTTVGLGDALNRIGQRAVMCLREPSLGPCFGMKGGAAGGGKAQVVPMEQINLHFTGDFHAITSAHSLAAALIDNHVYWANELNIDVRRIHWRRVVDMNDRALRAINQSLGGVANGFPREDGFDITVASEVMAVFCLARDLADLEERLGRIVIAETRDRKPVTLADVKATGAMTVLLKDALQPNLVQTLEGNPALIHGGPFANIAHGCNSVIATQTGLRLADYVVTEAGFGADLGAEKFIDIKCRQTGLKPSAVVIVATVRALKMHGGVNKKDLQGENLDALEKGFANLERHVKNVRGFGLPVVVGVNHFFQDTDAEHAKLKELCRDRLQVEAITCKHWAEGGAGAEELAQAVVKLAEGEQKPLTFAYDTETKLTDKIKAIATKLYGAADIQIESKAATKLAGFEKDGYGHLPICMAKTQYSFSTDPTLMGAPSGHLVSVRDVRLSAGAGFVVAICGEIMTMPGLPKVPAADTIRLDANGQIDGLF.

65–72 (TPAGEGKT) serves as a coordination point for ATP.

The protein belongs to the formate--tetrahydrofolate ligase family.

It catalyses the reaction (6S)-5,6,7,8-tetrahydrofolate + formate + ATP = (6R)-10-formyltetrahydrofolate + ADP + phosphate. Its pathway is one-carbon metabolism; tetrahydrofolate interconversion. This chain is Formate--tetrahydrofolate ligase, found in Methylorubrum populi (strain ATCC BAA-705 / NCIMB 13946 / BJ001) (Methylobacterium populi).